Reading from the N-terminus, the 217-residue chain is Peptidyl-tRNA hydrolase (217 aa).

Residue Tyr-14 participates in tRNA binding. Residue His-19 is the Proton acceptor of the active site. TRNA is bound by residues Tyr-64, Asn-66, and Asn-113. The segment at Met-182 to Gly-217 is disordered. Residues Ala-202–Gly-217 are compositionally biased toward low complexity.

It belongs to the PTH family. Monomer.

The protein resides in the cytoplasm. The catalysed reaction is an N-acyl-L-alpha-aminoacyl-tRNA + H2O = an N-acyl-L-amino acid + a tRNA + H(+). Its function is as follows. Hydrolyzes ribosome-free peptidyl-tRNAs (with 1 or more amino acids incorporated), which drop off the ribosome during protein synthesis, or as a result of ribosome stalling. Catalyzes the release of premature peptidyl moieties from peptidyl-tRNA molecules trapped in stalled 50S ribosomal subunits, and thus maintains levels of free tRNAs and 50S ribosomes. This chain is Peptidyl-tRNA hydrolase, found in Roseiflexus sp. (strain RS-1).